A 374-amino-acid polypeptide reads, in one-letter code: MARSLAWRCCPWCLSEDEKAAARVDQEITRLLLEHRRQVRGELKLLLLGTGESGKSTFIKQMRIIHGAGYSEEDRKGFRPLVFQNIFLSVQAIIEAMDRLQIPYSRPESKLHASLVMSQDPYKVNTFETRYALAVQSLWRDAGVRACYERRREFHLLDSAVYYLSHLERIAEEGYVPTAQDVLRSRMPTTGINEYCFSVQKTNLRIVDVGGQKSERRKWIHCFEDVTALIFLASLSEYDQCLEENGQENRMQESLALFGTVLALPWFRATSVILFLNKTDILEDKVRTSHLATYFPGFRGPPQDPEAAKRFILELYTRVYAGAAAGPDGASKGPRSRRLFSHYTCATDTQNIRKVFKDVRDSVLARYLDEINLL.

Positions 41–374 (GELKLLLLGT…ARYLDEINLL (334 aa)) constitute a G-alpha domain. The tract at residues 44-57 (KLLLLGTGESGKST) is G1 motif. GTP-binding positions include 49 to 56 (GTGESGKS), 183 to 189 (LRSRMPT), 208 to 212 (DVGGQ), 277 to 280 (NKTD), and Ala346. Ser56 and Thr189 together coordinate Mg(2+). Residues 181-189 (DVLRSRMPT) form a G2 motif region. The G3 motif stretch occupies residues 204-213 (LRIVDVGGQK). Residues 273-280 (ILFLNKTD) are G4 motif. A G5 motif region spans residues 344–349 (TCATDT).

It belongs to the G-alpha family. G(q) subfamily. G proteins are composed of 3 units; alpha, beta and gamma. The alpha chain contains the guanine nucleotide binding site.

Functionally, guanine nucleotide-binding proteins (G proteins) are involved as modulators or transducers in various transmembrane signaling systems. This is Guanine nucleotide-binding protein subunit alpha-15 (GNA15) from Oryctolagus cuniculus (Rabbit).